A 376-amino-acid chain; its full sequence is Protein RecA (376 aa).

79–86 (GPESSGKT) provides a ligand contact to ATP. Positions 357-376 (AAARAATDKPVETKGANAAA) are disordered.

This sequence belongs to the RecA family.

The protein resides in the cytoplasm. Can catalyze the hydrolysis of ATP in the presence of single-stranded DNA, the ATP-dependent uptake of single-stranded DNA by duplex DNA, and the ATP-dependent hybridization of homologous single-stranded DNAs. It interacts with LexA causing its activation and leading to its autocatalytic cleavage. The protein is Protein RecA of Synechococcus sp. (strain CC9902).